Reading from the N-terminus, the 307-residue chain is Methionyl-tRNA formyltransferase (307 aa).

108–111 (SLLP) provides a ligand contact to (6S)-5,6,7,8-tetrahydrofolate.

The protein belongs to the Fmt family.

It catalyses the reaction L-methionyl-tRNA(fMet) + (6R)-10-formyltetrahydrofolate = N-formyl-L-methionyl-tRNA(fMet) + (6S)-5,6,7,8-tetrahydrofolate + H(+). Functionally, attaches a formyl group to the free amino group of methionyl-tRNA(fMet). The formyl group appears to play a dual role in the initiator identity of N-formylmethionyl-tRNA by promoting its recognition by IF2 and preventing the misappropriation of this tRNA by the elongation apparatus. The protein is Methionyl-tRNA formyltransferase of Stenotrophomonas maltophilia (strain R551-3).